Consider the following 393-residue polypeptide: Arginine biosynthesis bifunctional protein ArgJ (393 aa).

Thr142, Lys168, Thr179, Glu265, Asn388, and Ser393 together coordinate substrate. Thr179 functions as the Nucleophile in the catalytic mechanism.

The protein belongs to the ArgJ family. In terms of assembly, heterotetramer of two alpha and two beta chains.

Its subcellular location is the cytoplasm. It catalyses the reaction N(2)-acetyl-L-ornithine + L-glutamate = N-acetyl-L-glutamate + L-ornithine. The enzyme catalyses L-glutamate + acetyl-CoA = N-acetyl-L-glutamate + CoA + H(+). The protein operates within amino-acid biosynthesis; L-arginine biosynthesis; L-ornithine and N-acetyl-L-glutamate from L-glutamate and N(2)-acetyl-L-ornithine (cyclic): step 1/1. It participates in amino-acid biosynthesis; L-arginine biosynthesis; N(2)-acetyl-L-ornithine from L-glutamate: step 1/4. Functionally, catalyzes two activities which are involved in the cyclic version of arginine biosynthesis: the synthesis of N-acetylglutamate from glutamate and acetyl-CoA as the acetyl donor, and of ornithine by transacetylation between N(2)-acetylornithine and glutamate. The sequence is that of Arginine biosynthesis bifunctional protein ArgJ from Desulfotalea psychrophila (strain LSv54 / DSM 12343).